Consider the following 454-residue polypeptide: UPF0210 protein Blon_2054/BLIJ_2131 (454 aa).

This sequence belongs to the UPF0210 family. In terms of assembly, homodimer.

This Bifidobacterium longum subsp. infantis (strain ATCC 15697 / DSM 20088 / JCM 1222 / NCTC 11817 / S12) protein is UPF0210 protein Blon_2054/BLIJ_2131.